We begin with the raw amino-acid sequence, 391 residues long: Formate-dependent phosphoribosylglycinamide formyltransferase (391 aa).

N(1)-(5-phospho-beta-D-ribosyl)glycinamide-binding positions include 18-19 (EL) and Glu78. ATP is bound by residues Arg110, Lys151, 156 to 161 (SSGKGQ), 191 to 194 (EEFI), and Glu199. Residues 115–305 (DLASKDLKIK…EFELHLRAFL (191 aa)) enclose the ATP-grasp domain. 2 residues coordinate Mg(2+): Glu264 and Glu276. N(1)-(5-phospho-beta-D-ribosyl)glycinamide-binding positions include Asp283, Lys353, and 360 to 361 (RR).

Belongs to the PurK/PurT family. As to quaternary structure, homodimer.

The enzyme catalyses N(1)-(5-phospho-beta-D-ribosyl)glycinamide + formate + ATP = N(2)-formyl-N(1)-(5-phospho-beta-D-ribosyl)glycinamide + ADP + phosphate + H(+). It functions in the pathway purine metabolism; IMP biosynthesis via de novo pathway; N(2)-formyl-N(1)-(5-phospho-D-ribosyl)glycinamide from N(1)-(5-phospho-D-ribosyl)glycinamide (formate route): step 1/1. Functionally, involved in the de novo purine biosynthesis. Catalyzes the transfer of formate to 5-phospho-ribosyl-glycinamide (GAR), producing 5-phospho-ribosyl-N-formylglycinamide (FGAR). Formate is provided by PurU via hydrolysis of 10-formyl-tetrahydrofolate. The protein is Formate-dependent phosphoribosylglycinamide formyltransferase of Prochlorococcus marinus (strain AS9601).